A 183-amino-acid polypeptide reads, in one-letter code: GTP cyclohydrolase 1 (183 aa).

Zn(2+)-binding residues include Cys-71, His-74, and Cys-142.

Belongs to the GTP cyclohydrolase I family. As to quaternary structure, toroid-shaped homodecamer, composed of two pentamers of five dimers.

The enzyme catalyses GTP + H2O = 7,8-dihydroneopterin 3'-triphosphate + formate + H(+). The protein operates within cofactor biosynthesis; 7,8-dihydroneopterin triphosphate biosynthesis; 7,8-dihydroneopterin triphosphate from GTP: step 1/1. This Leptospira borgpetersenii serovar Hardjo-bovis (strain JB197) protein is GTP cyclohydrolase 1.